Consider the following 432-residue polypeptide: Aspartate aminotransferase (432 aa).

45–46 is a binding site for substrate; it reads RG. 109–111 lines the pyridoxal 5'-phosphate pocket; sequence SSL. A substrate-binding site is contributed by 148 to 150; that stretch reads YDR. Pyridoxal 5'-phosphate is bound by residues N197, Y229, and 262–265; that span reads STSK. R400 provides a ligand contact to substrate.

It belongs to the class-I pyridoxal-phosphate-dependent aminotransferase family. As to quaternary structure, homodimer. The cofactor is pyridoxal 5'-phosphate.

It catalyses the reaction L-aspartate + 2-oxoglutarate = oxaloacetate + L-glutamate. This Corynebacterium glutamicum (strain ATCC 13032 / DSM 20300 / JCM 1318 / BCRC 11384 / CCUG 27702 / LMG 3730 / NBRC 12168 / NCIMB 10025 / NRRL B-2784 / 534) protein is Aspartate aminotransferase.